Reading from the N-terminus, the 250-residue chain is Ribonuclease HII (250 aa).

Residues 66–250 (QLVAGVDEVG…SFAPVSEYEK (185 aa)) enclose the RNase H type-2 domain. Positions 72, 73, and 164 each coordinate a divalent metal cation.

It belongs to the RNase HII family. Mn(2+) serves as cofactor. It depends on Mg(2+) as a cofactor.

It is found in the cytoplasm. The catalysed reaction is Endonucleolytic cleavage to 5'-phosphomonoester.. In terms of biological role, endonuclease that specifically degrades the RNA of RNA-DNA hybrids. The polypeptide is Ribonuclease HII (Lactobacillus gasseri (strain ATCC 33323 / DSM 20243 / BCRC 14619 / CIP 102991 / JCM 1131 / KCTC 3163 / NCIMB 11718 / NCTC 13722 / AM63)).